A 91-amino-acid chain; its full sequence is Potassium channel toxin Meg-beta-KTx1 (91 aa).

The first 19 residues, 1 to 19, serve as a signal peptide directing secretion; that stretch reads MQRNLVVLLFLGMVALSSC. Positions 20 to 27 are excised as a propeptide; it reads GLREKHFQ. Residues 54–91 form the BetaSPN-type CS-alpha/beta domain; that stretch reads QFGCPAYQGYCDDHCQDIKKQEGFCHGFKCKCGIPMGF. 3 disulfide bridges follow: Cys-57–Cys-78, Cys-64–Cys-83, and Cys-68–Cys-85.

The protein belongs to the long chain scorpion toxin family. Class 1 subfamily. In terms of tissue distribution, expressed by the venom gland.

Its subcellular location is the secreted. Its function is as follows. Inhibits voltage-gated potassium channel. This Mesobuthus gibbosus (Mediterranean checkered scorpion) protein is Potassium channel toxin Meg-beta-KTx1.